Reading from the N-terminus, the 620-residue chain is Translocator protein BipB (620 aa).

The tract at residues 58–95 (QCDAQPAAHDARLDDRPALRAPQERDAPPLGASDTGSR) is disordered. Residues 66–84 (HDARLDDRPALRAPQERDA) show a composition bias toward basic and acidic residues. Residues 309–339 (EMQAKREAELQKKSDEYQAQVKKAEEMQKTM) are a coiled coil. A run of 3 helical transmembrane segments spans residues 355 to 375 (FAAAAFTGGASLALAAVGLAL), 401 to 421 (AILKPLMEMISSLITKALVAC), and 430 to 450 (LAGAILGAVVTGVALVAAAFV).

This sequence belongs to the SctE/SipB/YopB family.

The protein localises to the secreted. It is found in the host membrane. Plays a role in the bacterium-induced formation of multinucleated giant cell (MNGC), which is formed after host cell fusion, as well as in the intercellular spreading of bacteria and in the induction of apoptosis in macrophages. May act in concert with other effector proteins to induce fusion of host cell membranes. This chain is Translocator protein BipB (bipB), found in Burkholderia mallei (strain NCTC 10247).